The chain runs to 155 residues: Large ribosomal subunit protein uL22c (155 aa).

It belongs to the universal ribosomal protein uL22 family. In terms of assembly, part of the 50S ribosomal subunit.

It is found in the plastid. The protein resides in the chloroplast. Functionally, this protein binds specifically to 23S rRNA. The globular domain of the protein is located near the polypeptide exit tunnel on the outside of the subunit, while an extended beta-hairpin is found that lines the wall of the exit tunnel in the center of the 70S ribosome. This chain is Large ribosomal subunit protein uL22c (rpl22), found in Nicotiana tomentosiformis (Tobacco).